Reading from the N-terminus, the 278-residue chain is Orotidine 5'-phosphate decarboxylase (278 aa).

Lysine 95 acts as the Proton donor in catalysis.

Belongs to the OMP decarboxylase family. Type 2 subfamily.

It catalyses the reaction orotidine 5'-phosphate + H(+) = UMP + CO2. It functions in the pathway pyrimidine metabolism; UMP biosynthesis via de novo pathway; UMP from orotate: step 2/2. This Corynebacterium glutamicum (strain R) protein is Orotidine 5'-phosphate decarboxylase.